A 548-amino-acid polypeptide reads, in one-letter code: Glucose-6-phosphate isomerase (548 aa).

Glu355 serves as the catalytic Proton donor. Catalysis depends on residues His386 and Lys514.

Belongs to the GPI family.

The protein resides in the cytoplasm. The enzyme catalyses alpha-D-glucose 6-phosphate = beta-D-fructose 6-phosphate. It participates in carbohydrate biosynthesis; gluconeogenesis. It functions in the pathway carbohydrate degradation; glycolysis; D-glyceraldehyde 3-phosphate and glycerone phosphate from D-glucose: step 2/4. Functionally, catalyzes the reversible isomerization of glucose-6-phosphate to fructose-6-phosphate. This is Glucose-6-phosphate isomerase from Proteus mirabilis (strain HI4320).